The sequence spans 270 residues: Acyl-[acyl-carrier-protein]--UDP-N-acetylglucosamine O-acyltransferase (270 aa).

The protein belongs to the transferase hexapeptide repeat family. LpxA subfamily. As to quaternary structure, homotrimer.

Its subcellular location is the cytoplasm. The enzyme catalyses a (3R)-hydroxyacyl-[ACP] + UDP-N-acetyl-alpha-D-glucosamine = a UDP-3-O-[(3R)-3-hydroxyacyl]-N-acetyl-alpha-D-glucosamine + holo-[ACP]. The protein operates within glycolipid biosynthesis; lipid IV(A) biosynthesis; lipid IV(A) from (3R)-3-hydroxytetradecanoyl-[acyl-carrier-protein] and UDP-N-acetyl-alpha-D-glucosamine: step 1/6. Its function is as follows. Involved in the biosynthesis of lipid A, a phosphorylated glycolipid that anchors the lipopolysaccharide to the outer membrane of the cell. This Sinorhizobium fredii (strain NBRC 101917 / NGR234) protein is Acyl-[acyl-carrier-protein]--UDP-N-acetylglucosamine O-acyltransferase.